The chain runs to 539 residues: Netrin-G1 (539 aa).

Residues 1-28 (MYLSRFLSIHALWVTVSSVMQPYPLVWG) form the signal peptide. Disulfide bonds link C33–C50, C72–C92, and C80–C88. A Laminin N-terminal domain is found at 46-296 (DYMACQPEST…AISDIKVRGR (251 aa)). The tract at residues 80–91 (CAMGNPYMCNNE) is NGL discriminant loop I. N133 is a glycosylation site (N-linked (GlcNAc...) asparagine). C182 and C206 are disulfide-bonded. Residues 208–214 (EEYSTGY) are NGL discriminant loop II. The tract at residues 273–275 (EIF) is NGL discriminant loop III. 15 cysteine pairs are disulfide-bonded: C297–C306, C299–C315, C317–C326, C329–C354, C364–C373, C366–C384, C387–C396, C399–C417, C420–C432, C422–C438, C440–C449, C452–C462, C467–C480, C474–C486, and C488–C497. 3 consecutive Laminin EGF-like domains span residues 297–356 (CKCN…TCIP), 364–419 (CECF…VCIE), and 420–469 (CYCN…VCDN). N320 carries N-linked (GlcNAc...) asparagine glycosylation. N406 is a glycosylation site (N-linked (GlcNAc...) asparagine). N-linked (GlcNAc...) asparagine glycosylation occurs at N433. A lipid anchor (GPI-anchor amidated serine) is attached at S510. Positions 511–539 (DSGQGAPPHGSPALLLLTTLLGTASPLVF) are cleaved as a propeptide — removed in mature form.

As to quaternary structure, interacts with NGL1. N-glycosylated. As to expression, highly expressed in the thalamus, with very low expression, if any, in other tissues.

It localises to the cell membrane. Functionally, involved in controlling patterning and neuronal circuit formation at the laminar, cellular, subcellular and synaptic levels. Promotes neurite outgrowth of both axons and dendrites. This is Netrin-G1 (NTNG1) from Homo sapiens (Human).